The primary structure comprises 517 residues: Ribonuclease Y (517 aa).

The helical transmembrane segment at 1 to 21 (MIEVVVGIGAGLIGIGAGYLV) threads the bilayer. The 67-residue stretch at 207–273 (LINVVNIKND…TRVIELLVED (67 aa)) folds into the KH domain. The 94-residue stretch at 333 to 426 (ALAHSLEVAH…VCAADALSAA (94 aa)) folds into the HD domain.

The protein belongs to the RNase Y family.

It localises to the cell membrane. Endoribonuclease that initiates mRNA decay. The sequence is that of Ribonuclease Y from Campylobacter fetus subsp. fetus (strain 82-40).